An 855-amino-acid chain; its full sequence is DNA mismatch repair protein MutS (855 aa).

621–628 lines the ATP pocket; it reads GPNMGGKS.

This sequence belongs to the DNA mismatch repair MutS family.

In terms of biological role, this protein is involved in the repair of mismatches in DNA. It is possible that it carries out the mismatch recognition step. This protein has a weak ATPase activity. In Francisella tularensis subsp. holarctica (strain OSU18), this protein is DNA mismatch repair protein MutS.